The chain runs to 783 residues: Glucosidase YgjK (783 aa).

The signal sequence occupies residues 1–22 (MKIKTILTPVTCALLISFSAHA). The tract at residues 24 to 254 (NADNYKNVIN…TTLYTTYSHL (231 aa)) is N-terminal domain. The interval 254–299 (LLTAQEVSKEQMQIRDILARPAFYLTASQQRWEEYLKKGLTNPDAT) is linker. The segment at 300 to 783 (PEQTRVAVKA…MLYNDFFRKQ (484 aa)) is a domain. 5 residues coordinate Ca(2+): Asp-454, Asn-456, Asn-458, Val-460, and Glu-462. The Proton donor role is filled by Asp-524. Glu-572 lines the Ca(2+) pocket. Residue Glu-750 is the Proton acceptor of the active site.

It belongs to the glycosyl hydrolase 63 family.

In terms of biological role, glucoside hydrolase that cleaves the alpha-1,3-glucosidic linkage in nigerose. Has very low activity towards maltooligosaccharides, soluble starch, nigerotriose, kojibiose and trehalose. This is Glucosidase YgjK (ygjK) from Escherichia coli (strain K12).